A 175-amino-acid polypeptide reads, in one-letter code: Peptide deformylase (175 aa).

Fe cation is bound by residues Cys-96 and His-138. Glu-139 is an active-site residue. Residue His-142 coordinates Fe cation.

The protein belongs to the polypeptide deformylase family. The cofactor is Fe(2+).

It catalyses the reaction N-terminal N-formyl-L-methionyl-[peptide] + H2O = N-terminal L-methionyl-[peptide] + formate. Removes the formyl group from the N-terminal Met of newly synthesized proteins. Requires at least a dipeptide for an efficient rate of reaction. N-terminal L-methionine is a prerequisite for activity but the enzyme has broad specificity at other positions. The protein is Peptide deformylase of Rhodopseudomonas palustris (strain ATCC BAA-98 / CGA009).